The primary structure comprises 172 residues: Trypsin inhibitor DE-3 (172 aa).

2 cysteine pairs are disulfide-bonded: Cys-39–Cys-83 and Cys-132–Cys-139.

It belongs to the protease inhibitor I3 (leguminous Kunitz-type inhibitor) family.

In terms of biological role, inhibition of trypsin. This chain is Trypsin inhibitor DE-3, found in Erythrina latissima (Broad-leaved coral tree).